The primary structure comprises 114 residues: uncharacterized protein (114 aa).

A disordered region spans residues 1–114 (MSTAASSRMR…HASQSPDTAY (114 aa)). Positions 32–43 (CRRVPSRPCRPV) are enriched in low complexity.

This is an uncharacterized protein from Human adenovirus B serotype 7 (HAdV-7).